Here is a 159-residue protein sequence, read N- to C-terminus: Immunogenic protein MPB63 (159 aa).

The N-terminal stretch at 1-29 (MKLTTMIKTAVAVVAMAAIATFAAPVALA) is a signal peptide.

Its subcellular location is the secreted. The chain is Immunogenic protein MPB63 (mpb63) from Mycobacterium bovis (strain ATCC BAA-935 / AF2122/97).